Consider the following 256-residue polypeptide: UPF0644 protein PB2B4.06 (256 aa).

A helical transmembrane segment spans residues 34 to 56; it reads GVVYAGVSGTCAAAGYMFGNFVM.

This sequence belongs to the UPF0644 family.

The protein resides in the mitochondrion membrane. The protein is UPF0644 protein PB2B4.06 of Schizosaccharomyces pombe (strain 972 / ATCC 24843) (Fission yeast).